The chain runs to 358 residues: Probable undecaprenyl-phosphate N-acetylglucosaminyl 1-phosphate transferase (358 aa).

11 helical membrane passes run 10–32 (VVAF…RIAI), 53–72 (MGGL…SGIY), 76–93 (RMTA…LGIL), 105–127 (FLIQ…FFSV), 137–157 (GWMA…AINL), 164–181 (LAAG…VMAL), 186–205 (VLIL…FLFY), 218–235 (GSLF…LGLY), 240–262 (LFSI…FAII), 292–311 (MSVL…AIVL), and 316–338 (IWLS…EVTG).

Belongs to the glycosyltransferase 4 family. It depends on Mg(2+) as a cofactor. Requires Mn(2+) as cofactor.

The protein resides in the cell membrane. The catalysed reaction is di-trans,octa-cis-undecaprenyl phosphate + UDP-N-acetyl-alpha-D-glucosamine = N-acetyl-alpha-D-glucosaminyl-di-trans,octa-cis-undecaprenyl diphosphate + UMP. The protein operates within cell wall biogenesis; poly(glucopyranosyl N-acetylgalactosamine 1-phosphate) teichoic acid biosynthesis. It functions in the pathway cell wall biogenesis; poly(glycerol phosphate) teichoic acid biosynthesis. In terms of biological role, catalyzes the formation of undecaprenyl-PP-N-acetylglucosamine. Involved in the synthesis of anionic cell-wall polymers as it mediates the initiation of the linkage unit formation that appears to be common to the two types of teichoic acids attached to the peptidoglycan of B.subtilis; may also be involved in teichuronic acid biosynthesis. This is Probable undecaprenyl-phosphate N-acetylglucosaminyl 1-phosphate transferase (tagO) from Bacillus subtilis (strain 168).